The primary structure comprises 367 residues: Dual specificity protein phosphatase 1 (367 aa).

The Rhodanese domain occupies 20–137; sequence RAAQCLLLDC…FSASCPELCS (118 aa). The Tyrosine-protein phosphatase domain maps to 173-314; that stretch reads GPVEILSFLY…LLQFESQVLA (142 aa). C258 functions as the Phosphocysteine intermediate in the catalytic mechanism. 2 positions are modified to phosphoserine; by MAPK1 and MAPK3: S359 and S364.

The protein belongs to the protein-tyrosine phosphatase family. Non-receptor class dual specificity subfamily. Phosphorylation at Ser-359 and Ser-364 by MAPK1/ERK2 and MAPK3/ERK1 reduces its rate of degradation. In terms of processing, 'Lys-48'-linked polyubiquitinated by NEURL3, leading to proteasomal degradation. Brain. High level expression seen in the cingulate gyrus within the retrospinal cortex, ventral and medial divisions of the anterior thalamus and the medial geniculate nucleus. Expressed at moderate levels in the parietal and temporal cortex. Expressed in the cerebellum.

It localises to the nucleus. It catalyses the reaction O-phospho-L-tyrosyl-[protein] + H2O = L-tyrosyl-[protein] + phosphate. The enzyme catalyses O-phospho-L-seryl-[protein] + H2O = L-seryl-[protein] + phosphate. The catalysed reaction is O-phospho-L-threonyl-[protein] + H2O = L-threonyl-[protein] + phosphate. Its function is as follows. Dual specificity phosphatase that dephosphorylates MAP kinase MAPK1/ERK2 on both 'Thr-183' and 'Tyr-185', regulating its activity during the meiotic cell cycle. This chain is Dual specificity protein phosphatase 1, found in Rattus norvegicus (Rat).